The following is a 541-amino-acid chain: Malate synthase (541 aa).

The Proton acceptor role is filled by Arg-172. Asp-452 acts as the Proton donor in catalysis.

This sequence belongs to the malate synthase family.

The protein localises to the cytoplasm. The catalysed reaction is glyoxylate + acetyl-CoA + H2O = (S)-malate + CoA + H(+). It functions in the pathway carbohydrate metabolism; glyoxylate cycle; (S)-malate from isocitrate: step 2/2. This is Malate synthase (mls) from Myxococcus xanthus (strain DK1622).